The chain runs to 221 residues: Small ribosomal subunit protein uS3 (221 aa).

In terms of domain architecture, KH type-2 spans 39–108; that stretch reads IRKFVKKELF…NILINIVEVK (70 aa).

It belongs to the universal ribosomal protein uS3 family. In terms of assembly, part of the 30S ribosomal subunit. Forms a tight complex with proteins S10 and S14.

Binds the lower part of the 30S subunit head. Binds mRNA in the 70S ribosome, positioning it for translation. The chain is Small ribosomal subunit protein uS3 from Clostridium botulinum (strain Alaska E43 / Type E3).